Reading from the N-terminus, the 622-residue chain is DNA mismatch repair protein MutL (622 aa).

Residues R376–M401 form a disordered region.

This sequence belongs to the DNA mismatch repair MutL/HexB family.

Its function is as follows. This protein is involved in the repair of mismatches in DNA. It is required for dam-dependent methyl-directed DNA mismatch repair. May act as a 'molecular matchmaker', a protein that promotes the formation of a stable complex between two or more DNA-binding proteins in an ATP-dependent manner without itself being part of a final effector complex. The chain is DNA mismatch repair protein MutL from Aeromonas hydrophila subsp. hydrophila (strain ATCC 7966 / DSM 30187 / BCRC 13018 / CCUG 14551 / JCM 1027 / KCTC 2358 / NCIMB 9240 / NCTC 8049).